The chain runs to 156 residues: MISILQRVKQARVEIDGQVAGSIGPGLLALVCAERGDTEAEADKLLAKMLKLRIFADDAGKMNRSVQDLDGQGACGGLLIVSQFTLAADTGGGNRPSFTRAAPPAEGERLYDYIVQRARALHPEVATGRFGADMQVHLLNDGPVTIPLSIAPATAA.

The short motif at 142 to 143 is the Gly-cisPro motif, important for rejection of L-amino acids element; it reads GP.

The protein belongs to the DTD family. In terms of assembly, homodimer.

The protein resides in the cytoplasm. The enzyme catalyses glycyl-tRNA(Ala) + H2O = tRNA(Ala) + glycine + H(+). It catalyses the reaction a D-aminoacyl-tRNA + H2O = a tRNA + a D-alpha-amino acid + H(+). Functionally, an aminoacyl-tRNA editing enzyme that deacylates mischarged D-aminoacyl-tRNAs. Also deacylates mischarged glycyl-tRNA(Ala), protecting cells against glycine mischarging by AlaRS. Acts via tRNA-based rather than protein-based catalysis; rejects L-amino acids rather than detecting D-amino acids in the active site. By recycling D-aminoacyl-tRNA to D-amino acids and free tRNA molecules, this enzyme counteracts the toxicity associated with the formation of D-aminoacyl-tRNA entities in vivo and helps enforce protein L-homochirality. This chain is D-aminoacyl-tRNA deacylase, found in Delftia acidovorans (strain DSM 14801 / SPH-1).